The chain runs to 455 residues: Bifunctional protein GlmU (455 aa).

A pyrophosphorylase region spans residues 1–232; the sequence is MASTTGALIL…DPNLLGVNNP (232 aa). Residues 10–13, lysine 24, glutamine 75, and 80–81 contribute to the UDP-N-acetyl-alpha-D-glucosamine site; these read LAAG and GT. A Mg(2+)-binding site is contributed by aspartate 106. Residues glycine 141, glutamate 155, asparagine 172, and asparagine 230 each coordinate UDP-N-acetyl-alpha-D-glucosamine. Asparagine 230 contacts Mg(2+). The interval 233–253 is linker; that stretch reads AELIRSEALLRTRLVIGHIEG. Residues 254–455 are N-acetyltransferase; it reads GVLIHAPETV…QTNLPRKPKA (202 aa). UDP-N-acetyl-alpha-D-glucosamine contacts are provided by arginine 336 and lysine 354. The active-site Proton acceptor is histidine 366. The UDP-N-acetyl-alpha-D-glucosamine site is built by tyrosine 369 and asparagine 380. Residues alanine 383, 389–390, serine 408, alanine 426, and arginine 443 each bind acetyl-CoA; that span reads NY.

It in the N-terminal section; belongs to the N-acetylglucosamine-1-phosphate uridyltransferase family. In the C-terminal section; belongs to the transferase hexapeptide repeat family. In terms of assembly, homotrimer. It depends on Mg(2+) as a cofactor.

The protein localises to the cytoplasm. The enzyme catalyses alpha-D-glucosamine 1-phosphate + acetyl-CoA = N-acetyl-alpha-D-glucosamine 1-phosphate + CoA + H(+). It catalyses the reaction N-acetyl-alpha-D-glucosamine 1-phosphate + UTP + H(+) = UDP-N-acetyl-alpha-D-glucosamine + diphosphate. It functions in the pathway nucleotide-sugar biosynthesis; UDP-N-acetyl-alpha-D-glucosamine biosynthesis; N-acetyl-alpha-D-glucosamine 1-phosphate from alpha-D-glucosamine 6-phosphate (route II): step 2/2. It participates in nucleotide-sugar biosynthesis; UDP-N-acetyl-alpha-D-glucosamine biosynthesis; UDP-N-acetyl-alpha-D-glucosamine from N-acetyl-alpha-D-glucosamine 1-phosphate: step 1/1. The protein operates within bacterial outer membrane biogenesis; LPS lipid A biosynthesis. In terms of biological role, catalyzes the last two sequential reactions in the de novo biosynthetic pathway for UDP-N-acetylglucosamine (UDP-GlcNAc). The C-terminal domain catalyzes the transfer of acetyl group from acetyl coenzyme A to glucosamine-1-phosphate (GlcN-1-P) to produce N-acetylglucosamine-1-phosphate (GlcNAc-1-P), which is converted into UDP-GlcNAc by the transfer of uridine 5-monophosphate (from uridine 5-triphosphate), a reaction catalyzed by the N-terminal domain. The protein is Bifunctional protein GlmU of Nitratidesulfovibrio vulgaris (strain ATCC 29579 / DSM 644 / CCUG 34227 / NCIMB 8303 / VKM B-1760 / Hildenborough) (Desulfovibrio vulgaris).